An 85-amino-acid polypeptide reads, in one-letter code: Dr hemagglutinin AFA-III operon regulatory protein AfaF (85 aa).

To E.coli PapI and DaaF.

Functionally, may have a possible regulatory function on the expression of the other AFA-III genes. The chain is Dr hemagglutinin AFA-III operon regulatory protein AfaF (afaF) from Escherichia coli.